Here is a 210-residue protein sequence, read N- to C-terminus: dTTP/UTP pyrophosphatase (210 aa).

Residue D89 is the Proton acceptor of the active site.

Belongs to the Maf family. YhdE subfamily. A divalent metal cation is required as a cofactor.

The protein localises to the cytoplasm. It catalyses the reaction dTTP + H2O = dTMP + diphosphate + H(+). The catalysed reaction is UTP + H2O = UMP + diphosphate + H(+). Its function is as follows. Nucleoside triphosphate pyrophosphatase that hydrolyzes dTTP and UTP. May have a dual role in cell division arrest and in preventing the incorporation of modified nucleotides into cellular nucleic acids. This Burkholderia orbicola (strain AU 1054) protein is dTTP/UTP pyrophosphatase.